The chain runs to 76 residues: MSKAHPPELKKFMDKKLSLKLNGGRHVQGILRGFDPFMNLVIDECVEMATSGQQNNIGMVVIRGNSIIMLEALERV.

The region spanning 4–76 (AHPPELKKFM…IIMLEALERV (73 aa)) is the Sm domain.

The protein belongs to the snRNP Sm proteins family. In terms of assembly, core component of the spliceosomal U1, U2, U4 and U5 small nuclear ribonucleoproteins (snRNPs), the building blocks of the spliceosome. Most spliceosomal snRNPs contain a common set of Sm proteins, SNRPB, SNRPD1, SNRPD2, SNRPD3, SNRPE, SNRPF and SNRPG that assemble in a heptameric protein ring on the Sm site of the small nuclear RNA to form the core snRNP. Component of the U1 snRNP. The U1 snRNP is composed of the U1 snRNA and the 7 core Sm proteins SNRPB, SNRPD1, SNRPD2, SNRPD3, SNRPE, SNRPF and SNRPG, and at least three U1 snRNP-specific proteins SNRNP70/U1-70K, SNRPA/U1-A and SNRPC/U1-C. Component of the U4/U6-U5 tri-snRNP complex composed of the U4, U6 and U5 snRNAs and at least PRPF3, PRPF4, PRPF6, PRPF8, PRPF31, SNRNP200, TXNL4A, SNRNP40, SNRPB, SNRPD1, SNRPD2, SNRPD3, SNRPE, SNRPF, SNRPG, DDX23, CD2BP2, PPIH, SNU13, EFTUD2, SART1 and USP39, plus LSM2, LSM3, LSM4, LSM5, LSM6, LSM7 and LSM8. Component of the U7 snRNP complex, or U7 Sm protein core complex, that is composed of the U7 snRNA and at least LSM10, LSM11, SNRPB, SNRPD3, SNRPE, SNRPF and SNRPG; the complex does not contain SNRPD1 and SNRPD2. Component of the minor spliceosome, which splices U12-type introns. Part of the SMN-Sm complex that contains SMN1, GEMIN2/SIP1, DDX20/GEMIN3, GEMIN4, GEMIN5, GEMIN6, GEMIN7, GEMIN8, STRAP/UNRIP and the Sm proteins SNRPB, SNRPD1, SNRPD2, SNRPD3, SNRPE, SNRPF and SNRPG; catalyzes core snRNPs assembly. Forms a 6S pICln-Sm complex composed of CLNS1A/pICln, SNRPD1, SNRPD2, SNRPE, SNRPF and SNRPG; ring-like structure where CLNS1A/pICln mimics additional Sm proteins and which is unable to assemble into the core snRNP. Interacts with GEMIN2 (via N-terminus); the interaction is direct. Interacts with SNRPE; the interaction is direct.

The protein localises to the cytoplasm. It is found in the cytosol. Its subcellular location is the nucleus. In terms of biological role, plays a role in pre-mRNA splicing as a core component of the spliceosomal U1, U2, U4 and U5 small nuclear ribonucleoproteins (snRNPs), the building blocks of the spliceosome. Component of both the pre-catalytic spliceosome B complex and activated spliceosome C complexes. As a component of the minor spliceosome, involved in the splicing of U12-type introns in pre-mRNAs. As part of the U7 snRNP it is involved in histone 3'-end processing. This chain is Small nuclear ribonucleoprotein G (SNRPG), found in Bos taurus (Bovine).